A 437-amino-acid chain; its full sequence is tRNA modification GTPase MnmE (437 aa).

(6S)-5-formyl-5,6,7,8-tetrahydrofolate contacts are provided by Arg-21, Glu-79, and Arg-119. The 142-residue stretch at 223–364 folds into the TrmE-type G domain; sequence GFRVVLAGPP…FRSALIAHAR (142 aa). Residues 233–238, 252–258, and 277–280 each bind GTP; these read NAGKST, AAEPGTT, and DTAG. Residues Ser-237 and Thr-258 each coordinate Mg(2+). A (6S)-5-formyl-5,6,7,8-tetrahydrofolate-binding site is contributed by Lys-437.

It belongs to the TRAFAC class TrmE-Era-EngA-EngB-Septin-like GTPase superfamily. TrmE GTPase family. As to quaternary structure, homodimer. Heterotetramer of two MnmE and two MnmG subunits. The cofactor is K(+).

The protein localises to the cytoplasm. Exhibits a very high intrinsic GTPase hydrolysis rate. Involved in the addition of a carboxymethylaminomethyl (cmnm) group at the wobble position (U34) of certain tRNAs, forming tRNA-cmnm(5)s(2)U34. The polypeptide is tRNA modification GTPase MnmE (Novosphingobium aromaticivorans (strain ATCC 700278 / DSM 12444 / CCUG 56034 / CIP 105152 / NBRC 16084 / F199)).